A 724-amino-acid polypeptide reads, in one-letter code: Acyl-coenzyme A oxidase 2 (724 aa).

The interval 1 to 48 (MAMLSQPNDGHDHPEKKDPDTTPKQVAGVISSQDPPHPAKDVAEERAR) is disordered. Basic and acidic residues-rich tracts occupy residues 9-21 (DGHD…DPDT) and 37-48 (HPAKDVAEERAR).

Belongs to the acyl-CoA oxidase family. FAD serves as cofactor.

Its subcellular location is the peroxisome. It carries out the reaction a 2,3-saturated acyl-CoA + O2 = a (2E)-enoyl-CoA + H2O2. The protein operates within lipid metabolism; peroxisomal fatty acid beta-oxidation. The chain is Acyl-coenzyme A oxidase 2 (POX2) from Candida tropicalis (Yeast).